Consider the following 242-residue polypeptide: Methylthioribulose-1-phosphate dehydratase (242 aa).

The tract at residues 1-22 (MAAASGHGLELANGGDATQDKL) is disordered. C97 serves as a coordination point for substrate. H115 and H117 together coordinate Zn(2+). E139 serves as the catalytic Proton donor/acceptor. H195 is a binding site for Zn(2+).

It belongs to the aldolase class II family. MtnB subfamily. Zn(2+) is required as a cofactor.

The protein localises to the cytoplasm. It carries out the reaction 5-(methylsulfanyl)-D-ribulose 1-phosphate = 5-methylsulfanyl-2,3-dioxopentyl phosphate + H2O. It participates in amino-acid biosynthesis; L-methionine biosynthesis via salvage pathway; L-methionine from S-methyl-5-thio-alpha-D-ribose 1-phosphate: step 2/6. Its function is as follows. Catalyzes the dehydration of methylthioribulose-1-phosphate (MTRu-1-P) into 2,3-diketo-5-methylthiopentyl-1-phosphate (DK-MTP-1-P). Functions in the methionine salvage pathway. May play a role in apoptosis. The polypeptide is Methylthioribulose-1-phosphate dehydratase (Gallus gallus (Chicken)).